The chain runs to 150 residues: MRPGSTPASRRKSRPPRRVSPPLPTTSTRSPGRPSAPEQRKAPRATPKKRFRPGTRALMEIRKYQKSTELLIRKAPFSRLVREVCMTYACGLNYSWQSMALMALQEASEAFLVRLFEDSYLCSLHAKRVTLYVQDIQLARRIRGVTEGLG.

The interval 1–56 (MRPGSTPASRRKSRPPRRVSPPLPTTSTRSPGRPSAPEQRKAPRATPKKRFRPGTR) is disordered. A compositionally biased stretch (low complexity) spans 25 to 37 (TTSTRSPGRPSAP). Positions 42–53 (APRATPKKRFRP) are enriched in basic residues. The H3-like stretch occupies residues 53-150 (PGTRALMEIR…RIRGVTEGLG (98 aa)).

The protein belongs to the histone H3 family. In terms of assembly, component of centromeric nucleosomes, where DNA is wrapped around a histone octamer core. The octamer contains two molecules each of H2A, H2B, CENPA and H4 assembled in one CENPA-H4 heterotetramer and two H2A-H2B heterodimers. CENPA modulates the DNA-binding characteristics of nucleosomes so that protruding DNA ends have higher flexibility than in nucleosomes containing conventional histone H3.

Its subcellular location is the nucleus. The protein localises to the chromosome. It localises to the centromere. Functionally, histone H3-like nucleosomal protein that is specifically found in centromeric nucleosomes. Replaces conventional H3 in the nucleosome core of centromeric chromatin that serves as an assembly site for the inner kinetochore. The presence of CENPA subtly modifies the nucleosome structure and the way DNA is wrapped around the nucleosome and gives rise to protruding DNA ends that are less well-ordered and rigid compared to nucleosomes containing histone H3. May serve as an epigenetic mark that propagates centromere identity through replication and cell division. Required for recruitment and assembly of kinetochore proteins, and as a consequence required for progress through mitosis, chromosome segregation and cytokinesis. This Xenopus tropicalis (Western clawed frog) protein is Histone H3-like centromeric protein A (cenpa).